A 253-amino-acid polypeptide reads, in one-letter code: Testis-expressed protein 101 (253 aa).

Positions 1 to 24 (MAACWVHYLLLLLLGVSHQTLAQS) are cleaved as a signal peptide. N-linked (GlcNAc...) asparagine glycosylation is found at Asn44, Asn112, Asn117, Asn121, and Asn162. Residues 53–117 (ETCNPGELCQ…SNYCNSSLCN (65 aa)) form the UPAR/Ly6 1 domain. One can recognise a UPAR/Ly6 2 domain in the interval 143 to 218 (CPTCVALGSC…KETCSYHSLL (76 aa)). Ser226 is lipidated: GPI-anchor amidated serine. A propeptide spans 227-253 (RASGRSTSLWVLELLLPAVLVALTHFP) (removed in mature form).

In terms of assembly, interacts with VAMP3. Interacts with LY6K. Interacts with DPEP3; co-localized on the cell surface of spermatocytes, spermatids, and testicular spermatozoa, co-localized only in cytoplasmic droplets of caput and corpus epididymal sperm. Interacts with ADAM5. In terms of processing, N-glycosylated; by high mannose and/or biantennary complex and/or certain types of hybrid oligosaccharides; possesses different oligosaccharides chains according to its subcellular localization in the testis. Post-translationally, sheds from membrane raft by ACE and released from the cell surface of epididymal sperm while it passes through the caput epididymis leading to disappearance of TEX101 on spermatozoa; is essential to produce fertile spermatozoa.

It is found in the cell membrane. The protein resides in the membrane raft. The protein localises to the cytoplasmic vesicle. It localises to the secretory vesicle. Its subcellular location is the acrosome. It is found in the secreted. Plays a role in fertilization by controlling binding of sperm to zona pellucida and migration of spermatozoa into the oviduct. May play a role in signal transduction and promote protein tyrosine phosphorylation. In Cricetulus griseus (Chinese hamster), this protein is Testis-expressed protein 101.